A 96-amino-acid polypeptide reads, in one-letter code: uncharacterized protein (96 aa).

The 40-residue stretch at 57-96 (MTKKVRTTKKDASISDAAALMDKHNVNRLPVVDENNKLVL) folds into the CBS domain.

This is an uncharacterized protein from Methanobacterium ivanovii.